The chain runs to 106 residues: Nucleoid-associated protein bll8115 (106 aa).

It belongs to the YbaB/EbfC family. Homodimer.

It localises to the cytoplasm. The protein resides in the nucleoid. In terms of biological role, binds to DNA and alters its conformation. May be involved in regulation of gene expression, nucleoid organization and DNA protection. The protein is Nucleoid-associated protein bll8115 of Bradyrhizobium diazoefficiens (strain JCM 10833 / BCRC 13528 / IAM 13628 / NBRC 14792 / USDA 110).